Consider the following 112-residue polypeptide: T cell receptor alpha variable 13-1 (112 aa).

Positions 1–20 (MTSIRAVFIFLWLQLDLVNG) are cleaved as a signal peptide. The Ig-like domain occupies 21–112 (ENVEQHPSTL…DSAVYFCAAS (92 aa)). An intrachain disulfide couples Cys42 to Cys109. Asn86 carries an N-linked (GlcNAc...) asparagine glycan.

As to quaternary structure, alpha-beta TR is a heterodimer composed of an alpha and beta chain; disulfide-linked. The alpha-beta TR is associated with the transmembrane signaling CD3 coreceptor proteins to form the TR-CD3 (TcR or TCR). The assembly of alpha-beta TR heterodimers with CD3 occurs in the endoplasmic reticulum where a single alpha-beta TR heterodimer associates with one CD3D-CD3E heterodimer, one CD3G-CD3E heterodimer and one CD247 homodimer forming a stable octameric structure. CD3D-CD3E and CD3G-CD3E heterodimers preferentially associate with TR alpha and TR beta chains, respectively. The association of the CD247 homodimer is the last step of TcR assembly in the endoplasmic reticulum and is required for transport to the cell surface.

The protein localises to the cell membrane. V region of the variable domain of T cell receptor (TR) alpha chain that participates in the antigen recognition. Alpha-beta T cell receptors are antigen specific receptors which are essential to the immune response and are present on the cell surface of T lymphocytes. Recognize peptide-major histocompatibility (MH) (pMH) complexes that are displayed by antigen presenting cells (APC), a prerequisite for efficient T cell adaptive immunity against pathogens. Binding of alpha-beta TR to pMH complex initiates TR-CD3 clustering on the cell surface and intracellular activation of LCK that phosphorylates the ITAM motifs of CD3G, CD3D, CD3E and CD247 enabling the recruitment of ZAP70. In turn ZAP70 phosphorylates LAT, which recruits numerous signaling molecules to form the LAT signalosome. The LAT signalosome propagates signal branching to three major signaling pathways, the calcium, the mitogen-activated protein kinase (MAPK) kinase and the nuclear factor NF-kappa-B (NF-kB) pathways, leading to the mobilization of transcription factors that are critical for gene expression and essential for T cell growth and differentiation. The T cell repertoire is generated in the thymus, by V-(D)-J rearrangement. This repertoire is then shaped by intrathymic selection events to generate a peripheral T cell pool of self-MH restricted, non-autoaggressive T cells. Post-thymic interaction of alpha-beta TR with the pMH complexes shapes TR structural and functional avidity. The polypeptide is T cell receptor alpha variable 13-1 (Homo sapiens (Human)).